The chain runs to 190 residues: Small ribosomal subunit protein uS4 (190 aa).

The S4 RNA-binding domain occupies 105–181; it reads RRLQTLVYKL…RKKAKAAEGG (77 aa). The disordered stretch occupies residues 163 to 190; the sequence is GGGRPGRVRRKKAKAAEGGDGDAEEDEE. The span at 181 to 190 shows a compositional bias: acidic residues; that stretch reads GDGDAEEDEE.

Belongs to the universal ribosomal protein uS4 family.

The sequence is that of Small ribosomal subunit protein uS4 (RPS9) from Podospora anserina (Pleurage anserina).